Consider the following 420-residue polypeptide: Putative competence-damage inducible protein (420 aa).

The protein belongs to the CinA family.

The protein is Putative competence-damage inducible protein of Halalkalibacterium halodurans (strain ATCC BAA-125 / DSM 18197 / FERM 7344 / JCM 9153 / C-125) (Bacillus halodurans).